Consider the following 1206-residue polypeptide: MSFFNFRKIFKLGSEKKKKQYEHVKRDLNPEEFWEIIGELGDGAFGKVYKAQNKETNVLAAAKVIDTKSEEELEDYMVEIDILASCDHPNIVKLLDAFYYENNLWILIEFCAGGAVDAVMLELERPLTESQIQVVCKQTLEALNYLHDNKIIHRDLKAGNILFTLDGDIKLADFGVSAKNTRTIQRRDSFIGTPYWMAPEVVMCETSKDRPYDYKADVWSLGITLIEMAEIEPPHHELNPMRVLLKIAKSEPPTLAQPSRWSSNFKDFLKKCLEKNVDARWTTSQLLQHPFVTVDSNKPVRELIAEAKAEVTEEVEDGKEEDDDDETESALPIPANKRASSDLSIASSEEDKLSQNACILESVSERTEHNTSGDKFSNKVLSEKPTPEGPEKTVDVDGPANDVNLETVAEPNDQAVGFHENGREKKRPQLESQPDTEDQQTVDVNLVGEGNDSNIVILETNTDCLKPEEDRNEENQEIIENKLTQSEEIKDIHIQTMDLVSQETGEKEADFQAIDNEVGFTKEETQEKLGKDDKTHKVVISDITSEVGTDEPPGDTQKSAEQSQDAEGGAGEEAPEPAQTLTEKATEGPEAHGAEEEPRSGERVEDKQLEQQSAVCEGEGQVTSTSESTRATTEEPETDEVDQVSESNSIEELERLGVTGAEEQALGSKGEAATELDLEREENAQELPVKAEPQAPAASQASEPPPVLIPSINIHSENTENKGEMGALPKPETILPPEPENGKGNDTDSGTGSTVENSSSDLNLSISSFLSKTKDSGSVSLQETRRQKKTLKKTRKFIVDGVEVSVTTSKIVTDSDSKTEELRFLRRQELRELRLLQKEEQKAQQQLNGKLQQQREQIFRRFEQEMLSKKRQYDQEIENLEKQQKQTIERLEQEHTNRLRDEAKRIKGEQEKELSKFQNMLRNRKKEEQEFVQKQQQELDGALKKIIQQQKAELANIERECLNNKQQLLRAREAAIWELEERHLQEKHQLLKQQLKDQYFIQRHQLLKRHEKETEQMQRYNQRLIEELKNRQTQERARLPKIQRSEAKTRMAMFKKSLRINSTATPDQDREKIKQFAAQEEKRQKNERMAQHQKHESQMRDLQLQCEANVRELHQLQNEKCHLLVEHETQKLKELDEEHSQELKEWREKLRPRKKTLEEEFARKLQEQEVFFKMTGESECLNPSAQSRGCLQTSHPSSTRAPAWAG.

Phosphoserine is present on S14. A Protein kinase domain is found at 34 to 292 (WEIIGELGDG…TSQLLQHPFV (259 aa)). ATP-binding positions include 40 to 48 (LGDGAFGKV) and K63. D155 (proton acceptor) is an active-site residue. T183 bears the Phosphothreonine mark. Position 189 is a phosphoserine (S189). Residues 308 to 352 (KAEVTEEVEDGKEEDDDDETESALPIPANKRASSDLSIASSEEDK) form a disordered region. A compositionally biased stretch (acidic residues) spans 312–328 (TEEVEDGKEEDDDDETE). A phosphoserine mark is found at S340, S341, S344, S347, S348, S354, and S372. Residues 364–440 (SERTEHNTSG…ESQPDTEDQQ (77 aa)) form a disordered region. Composition is skewed to basic and acidic residues over residues 381–395 (LSEKPTPEGPEKTVD) and 420–429 (ENGREKKRPQ). Positions 468 to 492 (EEDRNEENQEIIENKLTQSEEIKDI) form a coiled coil. 2 disordered regions span residues 515–761 (DNEV…SSSD) and 773–792 (TKDSGSVSLQETRRQKKTLK). Residues 520-536 (FTKEETQEKLGKDDKTH) show a composition bias toward basic and acidic residues. Phosphoserine is present on residues S545 and S563. The segment covering 556–565 (TQKSAEQSQD) has biased composition (polar residues). Positions 584–609 (KATEGPEAHGAEEEPRSGERVEDKQL) are enriched in basic and acidic residues. A compositionally biased stretch (acidic residues) spans 634–643 (EEPETDEVDQ). Phosphoserine is present on residues S645, S649, and S668. Over residues 691-702 (AEPQAPAASQAS) the composition is skewed to low complexity. Over residues 747–757 (TDSGTGSTVEN) the composition is skewed to polar residues. 2 positions are modified to phosphoserine: S776 and S778. T813 is modified (phosphothreonine). A Phosphoserine modification is found at S817. Residues 825-1037 (LRRQELRELR…LKNRQTQERA (213 aa)) adopt a coiled-coil conformation. The UVR domain occupies 874–909 (DQEIENLEKQQKQTIERLEQEHTNRLRDEAKRIKGE). Phosphothreonine is present on T1065. Residues 1077–1151 (AAQEEKRQKN…ELKEWREKLR (75 aa)) adopt a coiled-coil conformation. The span at 1079 to 1099 (QEEKRQKNERMAQHQKHESQM) shows a compositional bias: basic and acidic residues. 2 disordered regions span residues 1079-1100 (QEEKRQKNERMAQHQKHESQMR) and 1181-1206 (LNPSAQSRGCLQTSHPSSTRAPAWAG). The span at 1181–1200 (LNPSAQSRGCLQTSHPSSTR) shows a compositional bias: polar residues.

This sequence belongs to the protein kinase superfamily. STE Ser/Thr protein kinase family. STE20 subfamily. In terms of processing, proteolytically cleaved by caspase-3. Post-translationally, autophosphorylated.

It is found in the cytoplasm. It catalyses the reaction L-seryl-[protein] + ATP = O-phospho-L-seryl-[protein] + ADP + H(+). The enzyme catalyses L-threonyl-[protein] + ATP = O-phospho-L-threonyl-[protein] + ADP + H(+). Functionally, mediates apoptosis and actin stress fiber dissolution. The sequence is that of STE20-like serine/threonine-protein kinase (Slk) from Rattus norvegicus (Rat).